A 383-amino-acid polypeptide reads, in one-letter code: Mannan endo-1,4-beta-mannosidase (383 aa).

The signal sequence occupies residues 1–35 (MRNARSTLITTAGMAFAVLGLLFALAGPSAGRAEA). Residues 339-377 (GGSTGGTAPNGYPYCVNGGASDPDGDGWGWENSRSCVVR) form the CBM10 domain.

The protein belongs to the glycosyl hydrolase 5 (cellulase A) family. In terms of assembly, monomer.

It catalyses the reaction Random hydrolysis of (1-&gt;4)-beta-D-mannosidic linkages in mannans, galactomannans and glucomannans.. This chain is Mannan endo-1,4-beta-mannosidase (manA), found in Streptomyces lividans.